Consider the following 236-residue polypeptide: Lipoprotein signal peptidase (236 aa).

Transmembrane regions (helical) follow at residues 8–28 (FYGI…WVYF), 44–64 (WFKL…FGFT), 68–88 (VLLT…IWNL), and 98–118 (LLWG…DSIF). Active-site residues include aspartate 141 and aspartate 174. Residues 166 to 186 (CLPVFNLADVAILAGVALIVL) traverse the membrane as a helical segment.

Belongs to the peptidase A8 family.

It localises to the cell inner membrane. The enzyme catalyses Release of signal peptides from bacterial membrane prolipoproteins. Hydrolyzes -Xaa-Yaa-Zaa-|-(S,diacylglyceryl)Cys-, in which Xaa is hydrophobic (preferably Leu), and Yaa (Ala or Ser) and Zaa (Gly or Ala) have small, neutral side chains.. Its pathway is protein modification; lipoprotein biosynthesis (signal peptide cleavage). Functionally, this protein specifically catalyzes the removal of signal peptides from prolipoproteins. The chain is Lipoprotein signal peptidase from Amoebophilus asiaticus (strain 5a2).